Consider the following 307-residue polypeptide: MTVAKKHWFQIAFQLRGSVIGAIYKRVICCALFGVLVTLLYQLKIPVSQPILGSVIPSIVLGLLLVFRTNTAYDRFWEGRKAWGSIVNNTRNLARQIWVSVEEVSLKDREAKISVLNLLVAFAVATKLHLRGEPINSELEDLISTSRYFKLKSMNNPPLEVAFWIGDYLQQQYTCKCLNSYQLTSIQELLNNLVDNLGSCERILRTPMPLAYSIHLKQLLLLYCFLLPFQMVESLGWWTGLVVGLVSFTLFGIEAIGLEIENPFGYDPNDLPLDAICNTMKRNIDDLTSLSPNVRSHDLGETSNVTI.

4 helical membrane passes run V19–L39, V47–F67, P209–F229, and W238–L258.

The protein belongs to the anion channel-forming bestrophin (TC 1.A.46) family.

It is found in the cell membrane. This Nostoc sp. (strain PCC 7120 / SAG 25.82 / UTEX 2576) protein is Voltage-dependent anion channel-forming protein alr2987.